Here is a 339-residue protein sequence, read N- to C-terminus: MNALNAAMTVIGAGSYGTALAITLARNGHHVVLWGHDPKHIATLQHDRCNAAFLPDVPFPDTLHLESDLATALAASRDILIVVPSHVFGQVLRQIKPLMRPDARLVWATKGLEAETGRLLQDVAREALGDDIPLAVISGPTFAKELAAGLPTAISLAATDPQFAEDLQHLLHCGKSFRVYINPDFIGVQLGGAVKNVIAIGAGMSDGIGFGANARTALITRGLVEMSRLGAALGADPETFMGMAGLGDLVLTCTDNQSRNRRFGMMLGQGMDVQSAQDKIGQVVEGYRNTKEVRVLAQRLGVEMPITEEIYQVLYCGKIAREAALTLLGRARKDERSSN.

NADPH-binding residues include Ser-15, Tyr-16, His-36, and Lys-110. 3 residues coordinate sn-glycerol 3-phosphate: Lys-110, Gly-139, and Thr-141. An NADPH-binding site is contributed by Ala-143. Sn-glycerol 3-phosphate contacts are provided by Lys-195, Asp-248, Ser-258, Arg-259, and Asn-260. Lys-195 acts as the Proton acceptor in catalysis. Residue Arg-259 coordinates NADPH. NADPH contacts are provided by Val-283 and Glu-285.

The protein belongs to the NAD-dependent glycerol-3-phosphate dehydrogenase family.

The protein resides in the cytoplasm. It carries out the reaction sn-glycerol 3-phosphate + NAD(+) = dihydroxyacetone phosphate + NADH + H(+). The enzyme catalyses sn-glycerol 3-phosphate + NADP(+) = dihydroxyacetone phosphate + NADPH + H(+). It participates in membrane lipid metabolism; glycerophospholipid metabolism. Catalyzes the reduction of the glycolytic intermediate dihydroxyacetone phosphate (DHAP) to sn-glycerol 3-phosphate (G3P), the key precursor for phospholipid synthesis. The chain is Glycerol-3-phosphate dehydrogenase [NAD(P)+] from Klebsiella pneumoniae (strain 342).